The following is a 260-amino-acid chain: IGAGVSGLLGFATVASADEAEHGLECPSYPWPHAGILSSYDHASIRRGHQVYQQVCASCHSMSLVSYRDLVGVAYTEEEVKAMAAEIEVEDGPNDEGEMFTRPGKLSDRFPQPYPNEAAARFANGGAYPPDLSLITKARHNGQNYVFALLTAYRDPPAGVSIREGLHYNPYFPGGAIAMPKMLNDGAVEYEDGVPATEAQMGKDVVSFLTWAAEPEMEERKLMGFKWIFVLSLALLQAAYYRRLRWSVLKSRKLVLDVVN.

A mitochondrion-targeting transit peptide spans 1-17 (IGAGVSGLLGFATVASA). Residues 18–221 (DEAEHGLECP…AAEPEMEERK (204 aa)) lie on the Mitochondrial intermembrane side of the membrane. One can recognise a Cytochrome c domain in the interval 43-150 (ASIRRGHQVY…NGQNYVFALL (108 aa)). Cys56, Cys59, His60, and Met179 together coordinate heme c. The helical transmembrane segment at 222–241 (LMGFKWIFVLSLALLQAAYY) threads the bilayer. At 242 to 260 (RRLRWSVLKSRKLVLDVVN) the chain is on the mitochondrial matrix side.

The protein belongs to the cytochrome c family. As to quaternary structure, component of the ubiquinol-cytochrome c oxidoreductase (cytochrome b-c1 complex, complex III, CIII), a multisubunit enzyme composed of 3 respiratory subunits cytochrome b, cytochrome c1 and Rieske protein, 2 core protein subunits, and additional low-molecular weight protein subunits. The complex exists as an obligatory dimer and forms supercomplexes (SCs) in the inner mitochondrial membrane with cytochrome c oxidase (complex IV, CIV). The cofactor is heme c. As to expression, in all tissues analyzed.

It is found in the mitochondrion inner membrane. The enzyme catalyses a quinol + 2 Fe(III)-[cytochrome c](out) = a quinone + 2 Fe(II)-[cytochrome c](out) + 2 H(+)(out). Component of the ubiquinol-cytochrome c oxidoreductase, a multisubunit transmembrane complex that is part of the mitochondrial electron transport chain which drives oxidative phosphorylation. The respiratory chain contains 3 multisubunit complexes succinate dehydrogenase (complex II, CII), ubiquinol-cytochrome c oxidoreductase (cytochrome b-c1 complex, complex III, CIII) and cytochrome c oxidase (complex IV, CIV), that cooperate to transfer electrons derived from NADH and succinate to molecular oxygen, creating an electrochemical gradient over the inner membrane that drives transmembrane transport and the ATP synthase. The cytochrome b-c1 complex catalyzes electron transfer from ubiquinol to cytochrome c, linking this redox reaction to translocation of protons across the mitochondrial inner membrane, with protons being carried across the membrane as hydrogens on the quinol. In the process called Q cycle, 2 protons are consumed from the matrix, 4 protons are released into the intermembrane space and 2 electrons are passed to cytochrome c. Cytochrome c1 is a catalytic core subunit containing a c-type heme. It transfers electrons from the [2Fe-2S] iron-sulfur cluster of the Rieske protein to cytochrome c. The protein is Cytochrome c1-2, heme protein, mitochondrial (CYCL) of Solanum tuberosum (Potato).